A 25-amino-acid chain; its full sequence is Antithrombin-III (25 aa).

This sequence belongs to the serpin family. Forms protease inhibiting heterodimer with TMPRSS7. Post-translationally, phosphorylated by FAM20C in the extracellular medium. Plasma.

It is found in the secreted. It localises to the extracellular space. In terms of biological role, most important serine protease inhibitor in plasma that regulates the blood coagulation cascade. AT-III inhibits thrombin, matriptase-3/TMPRSS7, as well as factors IXa, Xa and XIa. Its inhibitory activity is greatly enhanced in the presence of heparin. The protein is Antithrombin-III (SERPINC1) of Mesocricetus auratus (Golden hamster).